Consider the following 1360-residue polypeptide: MAYSFTEKKRIRNNFGSRESILTEPDLLAIQIDSFNSFIQADNKIKQDIGLHNVLQSVFPITAVNGYAQIEYVDYQLKEPKFNVEECKLRGVTFASTLRVKLNLVLFDKNGSTLKKKRKVKQIIEEDVYLGQLPLMTETGTFVINGTERVVVSQLHRSPGVIFEHDKGKTHSSGKILFSSRIIPYRGSWLDFEYDHHEHLYVRIDRRRKLPVTTLLRAMGLSSEDILETFFEKTPVKLKAKSCDLSMLPIHLQRTIAEFDIVVNQHVVVEKGRRITAKHVKLLGKAGIKSINAPLEYLLDKVICADIINKDTGEILISANTITSEEVLELLNTNKVKKIEILYINSSETGAYISDTLRLDETQTEIEARMSIYHVMRPGEPATEDAVNLLFNNLFFKNDRYDLSKVGRMKLNRRLGISRETGEHVLTNDDIIRVIKLLINIKDGNDSVDDIDTLANRRVRAIGEMIENQFRIGLVRVEKAVREGLNLAETDELTPQDLINSKPVSAAVREFFGSSQLSQFMDQVNPLSGVTHKRRISALGPGGLTRERAGFEVRDVHPSHYGRLCPIETPEGPNIGLINTLAVYAKTNSYGFLETPYQIVKNGKVTKEVIYVSAIDEITHTIAQANALVDDRGKLMDDLISCRHKNEFVLVDSSEVTLIDIDSKQISSVAASLIPFLEHDDANRALMGSNMQRQAVPVLKAEKPLVGTGIERVVAKDSRVCVTAKHGGVVEAVDASRIVIRVDSKKTKANELGVDIYNLTKYSRSNQNTCINQKPLVRTGDKITFGDVLADGPSTDMGELALGQNMKIAFMPWNGYNFEDSILISEKVVQEDRYTTIHIEELTAYSRDTKLGPEEITSDIPNVSESALSKLDEVGVVYVGARVKGGDILVGKVTPKSETVLSPEEKLLRAIFGEKANNVKDSSLRIGASKSGVVIDVQVFTRDRVEKDIRALSIDAERLERIKKDIDDEFSIIDGDIFRRIRLKLLGNVLSKAIGDIRIGERLSIKLMKKFDNKDIAKFKVENATVNKEVAVLVKQAKAKKVEFEKFFKKEKAKINEGAELPPGVMKMVKVYVATRKTLQVGDKMAGRHGNKGVISRVSPVEDMPYLADGSTIDIVLNPLGVPSRMNVGQVLEVHLGYAAKGLGYKIAAILDERRPDMVKQIRVFLDKVYNLHGKKEDLTLFSNEEIIELANNLREGVPMATPVFDGIREQDIKSLLRLADLPESGQEQLYDGRTGEPFDRHVTVGYMHMLKLNHLVDDKMHARSTGPYSLVTQQPLSGKAQFGGQRFGEMEVWALEAYGAAHTLREMLTVKSDDVAGRAKMYKSIVDGKNLTESVMPESFNVLVKEIRSLGIDVELEQH.

It belongs to the RNA polymerase beta chain family. In terms of assembly, the RNAP catalytic core consists of 2 alpha, 1 beta, 1 beta' and 1 omega subunit. When a sigma factor is associated with the core the holoenzyme is formed, which can initiate transcription.

It catalyses the reaction RNA(n) + a ribonucleoside 5'-triphosphate = RNA(n+1) + diphosphate. DNA-dependent RNA polymerase catalyzes the transcription of DNA into RNA using the four ribonucleoside triphosphates as substrates. This Vesicomyosocius okutanii subsp. Calyptogena okutanii (strain HA) protein is DNA-directed RNA polymerase subunit beta.